Consider the following 444-residue polypeptide: Chromosome partition protein MukF (444 aa).

The tract at residues Leu-212–Ile-240 is leucine-zipper.

It belongs to the MukF family. In terms of assembly, interacts, and probably forms a ternary complex, with MukE and MukB via its C-terminal region. The complex formation is stimulated by calcium or magnesium. It is required for an interaction between MukE and MukB.

Its subcellular location is the cytoplasm. The protein resides in the nucleoid. Its function is as follows. Involved in chromosome condensation, segregation and cell cycle progression. May participate in facilitating chromosome segregation by condensation DNA from both sides of a centrally located replisome during cell division. Not required for mini-F plasmid partitioning. Probably acts via its interaction with MukB and MukE. Overexpression results in anucleate cells. It has a calcium binding activity. The polypeptide is Chromosome partition protein MukF (Haemophilus influenzae (strain ATCC 51907 / DSM 11121 / KW20 / Rd)).